The primary structure comprises 215 residues: Large ribosomal subunit protein uL3 (215 aa).

Positions 124–164 are disordered; it reads KRHGFSRGPMTHGSKNHREPGSTGAGTTPGRIYPGKRMAGR.

The protein belongs to the universal ribosomal protein uL3 family. As to quaternary structure, part of the 50S ribosomal subunit. Forms a cluster with proteins L14 and L19.

Functionally, one of the primary rRNA binding proteins, it binds directly near the 3'-end of the 23S rRNA, where it nucleates assembly of the 50S subunit. The chain is Large ribosomal subunit protein uL3 from Synechococcus sp. (strain RCC307).